The following is an 84-amino-acid chain: Large ribosomal subunit protein bL27 (84 aa).

The interval 1-21 is disordered; sequence MAHKKGVGSSRNGRDSDGQRL.

Belongs to the bacterial ribosomal protein bL27 family.

The sequence is that of Large ribosomal subunit protein bL27 from Trichlorobacter lovleyi (strain ATCC BAA-1151 / DSM 17278 / SZ) (Geobacter lovleyi).